Here is a 61-residue protein sequence, read N- to C-terminus: Small ribosomal subunit protein uS14 (61 aa).

Positions 24, 27, 40, and 43 each coordinate Zn(2+).

This sequence belongs to the universal ribosomal protein uS14 family. Zinc-binding uS14 subfamily. In terms of assembly, part of the 30S ribosomal subunit. Contacts proteins S3 and S10. Requires Zn(2+) as cofactor.

In terms of biological role, binds 16S rRNA, required for the assembly of 30S particles and may also be responsible for determining the conformation of the 16S rRNA at the A site. In Aliarcobacter butzleri (strain RM4018) (Arcobacter butzleri), this protein is Small ribosomal subunit protein uS14.